Reading from the N-terminus, the 390-residue chain is S-adenosylmethionine:tRNA ribosyltransferase-isomerase (390 aa).

The disordered stretch occupies residues 1–22 (MTQPLSQDQHDSSSNMPTDNAE).

This sequence belongs to the QueA family. In terms of assembly, monomer.

The protein localises to the cytoplasm. It carries out the reaction 7-aminomethyl-7-carbaguanosine(34) in tRNA + S-adenosyl-L-methionine = epoxyqueuosine(34) in tRNA + adenine + L-methionine + 2 H(+). The protein operates within tRNA modification; tRNA-queuosine biosynthesis. Its function is as follows. Transfers and isomerizes the ribose moiety from AdoMet to the 7-aminomethyl group of 7-deazaguanine (preQ1-tRNA) to give epoxyqueuosine (oQ-tRNA). In Psychrobacter sp. (strain PRwf-1), this protein is S-adenosylmethionine:tRNA ribosyltransferase-isomerase.